A 304-amino-acid chain; its full sequence is Plasmodesmata-located protein 3 (304 aa).

Residues 1-26 (MGFYSLKQLLLLYIIIMALFSDLKLA) form the signal peptide. At 27–272 (KSSSPEYTNL…SSSSGTTGKT (246 aa)) the chain is on the extracellular side. Gnk2-homologous domains lie at 34–138 (TNLI…ISGF) and 143–242 (GMEL…FYPN). Disulfide bonds link Cys41/Cys116, Cys92/Cys101, Cys104/Cys129, Cys151/Cys220, Cys196/Cys205, and Cys208/Cys233. The helical transmembrane segment at 273-293 (VAIIVGGTAGVGFLVICLLFV) threads the bilayer. The tract at residues 273 to 293 (VAIIVGGTAGVGFLVICLLFV) is necessary and sufficient for plasmodesmal targeting. The Cytoplasmic segment spans residues 294–304 (KNLMKKKYDDY).

The protein belongs to the cysteine-rich repeat secretory protein family. Plasmodesmata-located proteins (PDLD) subfamily. (Microbial infection) Interacts with Grapevine fanleaf virus (GFLV) 2B-MP. As to expression, highly expressed in inflorescence pedacel and shoot apex. Expressed in the outermost L1 layer of the shoot apical meristem and in the epidermis of bulging floral primordia. Within the L1, expression was restricted to the peripheral zone (at protein level).

It is found in the cell membrane. The protein resides in the cell junction. Its subcellular location is the plasmodesma. Modulates cell-to-cell trafficking. The sequence is that of Plasmodesmata-located protein 3 from Arabidopsis thaliana (Mouse-ear cress).